A 706-amino-acid polypeptide reads, in one-letter code: Elongation factor G (706 aa).

Residues 8 to 297 form the tr-type G domain; the sequence is ERVRNIGIAA…AVIDYLPAPT (290 aa). Residues 17 to 24, 96 to 100, and 150 to 153 contribute to the GTP site; these read AHIDAGKT, DTPGH, and NKMD.

This sequence belongs to the TRAFAC class translation factor GTPase superfamily. Classic translation factor GTPase family. EF-G/EF-2 subfamily.

The protein resides in the cytoplasm. Its function is as follows. Catalyzes the GTP-dependent ribosomal translocation step during translation elongation. During this step, the ribosome changes from the pre-translocational (PRE) to the post-translocational (POST) state as the newly formed A-site-bound peptidyl-tRNA and P-site-bound deacylated tRNA move to the P and E sites, respectively. Catalyzes the coordinated movement of the two tRNA molecules, the mRNA and conformational changes in the ribosome. This Cyanothece sp. (strain PCC 7425 / ATCC 29141) protein is Elongation factor G.